A 179-amino-acid chain; its full sequence is Large ribosomal subunit protein uL6 (179 aa).

This sequence belongs to the universal ribosomal protein uL6 family. In terms of assembly, part of the 50S ribosomal subunit.

Its function is as follows. This protein binds to the 23S rRNA, and is important in its secondary structure. It is located near the subunit interface in the base of the L7/L12 stalk, and near the tRNA binding site of the peptidyltransferase center. This is Large ribosomal subunit protein uL6 from Bifidobacterium longum (strain DJO10A).